The sequence spans 318 residues: tRNA U34 carboxymethyltransferase (318 aa).

Residues Lys88, Trp102, Lys107, Gly126, Met192, Tyr196, and Arg311 each contribute to the carboxy-S-adenosyl-L-methionine site.

The protein belongs to the class I-like SAM-binding methyltransferase superfamily. CmoB family. Homotetramer.

It catalyses the reaction carboxy-S-adenosyl-L-methionine + 5-hydroxyuridine(34) in tRNA = 5-carboxymethoxyuridine(34) in tRNA + S-adenosyl-L-homocysteine + H(+). Catalyzes carboxymethyl transfer from carboxy-S-adenosyl-L-methionine (Cx-SAM) to 5-hydroxyuridine (ho5U) to form 5-carboxymethoxyuridine (cmo5U) at position 34 in tRNAs. This Pseudomonas fluorescens (strain Pf0-1) protein is tRNA U34 carboxymethyltransferase.